A 393-amino-acid chain; its full sequence is Chorismate synthase (393 aa).

NADP(+)-binding residues include Arg40 and Arg46. Residues 129 to 131 (RSS), 249 to 250 (QA), Gly301, 316 to 320 (KPIPT), and Arg342 contribute to the FMN site.

It belongs to the chorismate synthase family. As to quaternary structure, homotetramer. FMNH2 is required as a cofactor.

The catalysed reaction is 5-O-(1-carboxyvinyl)-3-phosphoshikimate = chorismate + phosphate. Its pathway is metabolic intermediate biosynthesis; chorismate biosynthesis; chorismate from D-erythrose 4-phosphate and phosphoenolpyruvate: step 7/7. Its function is as follows. Catalyzes the anti-1,4-elimination of the C-3 phosphate and the C-6 proR hydrogen from 5-enolpyruvylshikimate-3-phosphate (EPSP) to yield chorismate, which is the branch point compound that serves as the starting substrate for the three terminal pathways of aromatic amino acid biosynthesis. This reaction introduces a second double bond into the aromatic ring system. This is Chorismate synthase from Geotalea daltonii (strain DSM 22248 / JCM 15807 / FRC-32) (Geobacter daltonii).